A 610-amino-acid polypeptide reads, in one-letter code: UvrABC system protein C (610 aa).

A GIY-YIG domain is found at 13–91 (HLPGVYRMYD…IKENQPKYNV (79 aa)). Residues 201 to 236 (GQVVEHLVQKMENAAQELDFEAAARFRDQIQSVRAV) form the UVR domain.

The protein belongs to the UvrC family. As to quaternary structure, interacts with UvrB in an incision complex.

The protein localises to the cytoplasm. The UvrABC repair system catalyzes the recognition and processing of DNA lesions. UvrC both incises the 5' and 3' sides of the lesion. The N-terminal half is responsible for the 3' incision and the C-terminal half is responsible for the 5' incision. The protein is UvrABC system protein C of Actinobacillus pleuropneumoniae serotype 5b (strain L20).